The sequence spans 545 residues: Glucose-6-phosphate isomerase (545 aa).

The active-site Proton donor is Glu-351. Residues His-382 and Lys-510 contribute to the active site.

It belongs to the GPI family.

The protein resides in the cytoplasm. The enzyme catalyses alpha-D-glucose 6-phosphate = beta-D-fructose 6-phosphate. Its pathway is carbohydrate biosynthesis; gluconeogenesis. It participates in carbohydrate degradation; glycolysis; D-glyceraldehyde 3-phosphate and glycerone phosphate from D-glucose: step 2/4. Functionally, catalyzes the reversible isomerization of glucose-6-phosphate to fructose-6-phosphate. In Shewanella baltica (strain OS223), this protein is Glucose-6-phosphate isomerase.